The chain runs to 1241 residues: ATP-dependent helicase/nuclease subunit A (1241 aa).

The region spanning 12–485 (SQWTDDQWKA…IDLAKNFRSR (474 aa)) is the UvrD-like helicase ATP-binding domain. Residue 33–40 (AAAGSGKT) participates in ATP binding. In terms of domain architecture, UvrD-like helicase C-terminal spans 505-805 (GEIDYDADAE…RIMTIHKSKG (301 aa)).

The protein belongs to the helicase family. AddA subfamily. In terms of assembly, heterodimer of AddA and AddB/RexB. The cofactor is Mg(2+).

The enzyme catalyses Couples ATP hydrolysis with the unwinding of duplex DNA by translocating in the 3'-5' direction.. The catalysed reaction is ATP + H2O = ADP + phosphate + H(+). Functionally, the heterodimer acts as both an ATP-dependent DNA helicase and an ATP-dependent, dual-direction single-stranded exonuclease. Recognizes the chi site generating a DNA molecule suitable for the initiation of homologous recombination. The AddA nuclease domain is required for chi fragment generation; this subunit has the helicase and 3' -&gt; 5' nuclease activities. The polypeptide is ATP-dependent helicase/nuclease subunit A (Bacillus cereus (strain B4264)).